The following is an 82-amino-acid chain: Beta-defensin 119 (82 aa).

The signal sequence occupies residues 1 to 19 (MKFFLFFVILLAMEPVISG). 3 cysteine pairs are disulfide-bonded: C26/C53, C33/C47, and C37/C54.

It belongs to the beta-defensin family.

It localises to the secreted. Its function is as follows. Has antibacterial activity. This Canis lupus familiaris (Dog) protein is Beta-defensin 119 (DEFB119).